The following is a 467-amino-acid chain: Acid phosphatase PHO11 (467 aa).

Residues methionine 1 to alanine 17 form the signal peptide. The Nucleophile role is filled by histidine 75. Asparagine 97, asparagine 162, asparagine 192, asparagine 250, and asparagine 315 each carry an N-linked (GlcNAc...) asparagine glycan. The active-site Proton donor is the aspartate 338. Residues asparagine 356, asparagine 390, asparagine 439, asparagine 445, and asparagine 461 are each glycosylated (N-linked (GlcNAc...) asparagine).

This sequence belongs to the histidine acid phosphatase family. Glycosylated during secretion across the membrane.

It carries out the reaction a phosphate monoester + H2O = an alcohol + phosphate. The sequence is that of Acid phosphatase PHO11 (PHO11) from Saccharomyces cerevisiae (strain ATCC 204508 / S288c) (Baker's yeast).